The chain runs to 332 residues: RNA polymerase II holoenzyme cyclin-like subunit (332 aa).

One can recognise a Cyclin N-terminal domain in the interval arginine 74–isoleucine 175.

This sequence belongs to the cyclin family. Cyclin C subfamily. Component of the SRB8-11 complex, a regulatory module of the Mediator complex.

The protein localises to the nucleus. Its function is as follows. Component of the SRB8-11 complex. The SRB8-11 complex is a regulatory module of the Mediator complex which is itself involved in regulation of basal and activated RNA polymerase II-dependent transcription. The SRB8-11 complex may be involved in the transcriptional repression of a subset of genes regulated by Mediator. It may inhibit the association of the Mediator complex with RNA polymerase II to form the holoenzyme complex. The SRB8-11 complex phosphorylates the C-terminal domain (CTD) of the largest subunit of RNA polymerase II. In Eremothecium gossypii (strain ATCC 10895 / CBS 109.51 / FGSC 9923 / NRRL Y-1056) (Yeast), this protein is RNA polymerase II holoenzyme cyclin-like subunit (SSN8).